The following is a 160-amino-acid chain: Sulfur-rich protein (160 aa).

2 consecutive transmembrane segments (helical) span residues 63-83 (ITMV…TFVL) and 92-112 (FLFL…SVCM).

The protein localises to the membrane. In Chlamydophila psittaci (strain ATCC VR-125 / 6BC) (Chlamydia psittaci), this protein is Sulfur-rich protein (srp).